The sequence spans 395 residues: uncharacterized protein (395 aa).

Disordered stretches follow at residues 17-155 and 276-304; these read EVKK…QVKT and EEREKSAIKQNKEQSSEGSKTANQTHEQK. Polar residues-rich tracts occupy residues 42-71 and 81-96; these read DGNNQVNEPTGNDNTQVVENTEDISASNVV and GDASTQSPETSENVVK. Residues 103–133 show a composition bias toward basic and acidic residues; the sequence is VAEKPEKEDLAVIESEDKAAKPDGEIKKNVE. Residues 134 to 143 show a composition bias toward low complexity; that stretch reads TEVTSRSTSS. Basic and acidic residues-rich tracts occupy residues 144–155 and 276–290; these read QEKDELEKQVKT and EEREKSAIKQNKEQS. Residues 224 to 351 are a coiled coil; that stretch reads LKMNGKEDDL…QRRLKELEAM (128 aa). Residues 291 to 300 are compositionally biased toward polar residues; the sequence is SEGSKTANQT.

It is found in the cytoplasm. This is an uncharacterized protein from Schizosaccharomyces pombe (strain 972 / ATCC 24843) (Fission yeast).